The following is a 282-amino-acid chain: 4-diphosphocytidyl-2-C-methyl-D-erythritol kinase (282 aa).

K9 is a catalytic residue. 98-108 lines the ATP pocket; that stretch reads PMGGGLGGGSS. D140 is a catalytic residue.

This sequence belongs to the GHMP kinase family. IspE subfamily. As to quaternary structure, homodimer.

It catalyses the reaction 4-CDP-2-C-methyl-D-erythritol + ATP = 4-CDP-2-C-methyl-D-erythritol 2-phosphate + ADP + H(+). The protein operates within isoprenoid biosynthesis; isopentenyl diphosphate biosynthesis via DXP pathway; isopentenyl diphosphate from 1-deoxy-D-xylulose 5-phosphate: step 3/6. Its function is as follows. Catalyzes the phosphorylation of the position 2 hydroxy group of 4-diphosphocytidyl-2C-methyl-D-erythritol. This chain is 4-diphosphocytidyl-2-C-methyl-D-erythritol kinase, found in Salmonella schwarzengrund (strain CVM19633).